The sequence spans 89 residues: MVVVRLARGGAKKRPFYSMVVADSRNRRDGKFIERVGFYNPRATGGEESLRIQMDRLTYWQSKGAQLSDTVSRLVKQFGRQQKAAQPQE.

The protein belongs to the bacterial ribosomal protein bS16 family.

The polypeptide is Small ribosomal subunit protein bS16 (Nitrosomonas europaea (strain ATCC 19718 / CIP 103999 / KCTC 2705 / NBRC 14298)).